Reading from the N-terminus, the 104-residue chain is MASVSSIFGCGVSMAPNSSLRNKAIRTERRSACGGLLIECSSRPQKKSTAHHMKTRPRKSRLSDRNRKPTVYAPLPPLPPDFTIVIPADASTVDFTPPPPTPSD.

Residues 1–39 constitute a chloroplast transit peptide; it reads MASVSSIFGCGVSMAPNSSLRNKAIRTERRSACGGLLIE. Residues 42–76 form a disordered region; that stretch reads SRPQKKSTAHHMKTRPRKSRLSDRNRKPTVYAPLP. The segment covering 44 to 60 has biased composition (basic residues); it reads PQKKSTAHHMKTRPRKS.

This sequence belongs to the chloroplast-specific ribosomal protein cL38 family. As to quaternary structure, part of the 50S ribosomal subunit.

It is found in the plastid. It localises to the chloroplast. This is Large ribosomal subunit protein cL38 (PSRP6) from Pisum sativum (Garden pea).